A 240-amino-acid chain; its full sequence is 1-(5-phosphoribosyl)-5-[(5-phosphoribosylamino)methylideneamino] imidazole-4-carboxamide isomerase (240 aa).

Aspartate 8 functions as the Proton acceptor in the catalytic mechanism. Residue aspartate 129 is the Proton donor of the active site.

The protein belongs to the HisA/HisF family.

It localises to the cytoplasm. The catalysed reaction is 1-(5-phospho-beta-D-ribosyl)-5-[(5-phospho-beta-D-ribosylamino)methylideneamino]imidazole-4-carboxamide = 5-[(5-phospho-1-deoxy-D-ribulos-1-ylimino)methylamino]-1-(5-phospho-beta-D-ribosyl)imidazole-4-carboxamide. Its pathway is amino-acid biosynthesis; L-histidine biosynthesis; L-histidine from 5-phospho-alpha-D-ribose 1-diphosphate: step 4/9. The protein is 1-(5-phosphoribosyl)-5-[(5-phosphoribosylamino)methylideneamino] imidazole-4-carboxamide isomerase of Listeria monocytogenes serotype 4b (strain CLIP80459).